The sequence spans 131 residues: Small ribosomal subunit protein uS8 (131 aa).

Belongs to the universal ribosomal protein uS8 family. As to quaternary structure, part of the 30S ribosomal subunit. Contacts proteins S5 and S12.

Its function is as follows. One of the primary rRNA binding proteins, it binds directly to 16S rRNA central domain where it helps coordinate assembly of the platform of the 30S subunit. The chain is Small ribosomal subunit protein uS8 from Campylobacter jejuni subsp. doylei (strain ATCC BAA-1458 / RM4099 / 269.97).